Consider the following 370-residue polypeptide: Protein STRICTOSIDINE SYNTHASE-LIKE 9 (370 aa).

An N-terminal signal peptide occupies residues 1 to 26; sequence MPINQKIPTWFAVPAVFAVLSVISYQ. 2 N-linked (GlcNAc...) asparagine glycosylation sites follow: Asn97 and Asn171.

Belongs to the strictosidine synthase family.

The protein localises to the vacuole. This Arabidopsis thaliana (Mouse-ear cress) protein is Protein STRICTOSIDINE SYNTHASE-LIKE 9.